We begin with the raw amino-acid sequence, 131 residues long: uncharacterized protein (131 aa).

Transmembrane regions (helical) follow at residues 5-25 (VQPI…YVLV) and 34-54 (MAVT…YVMN). The interval 62–131 (AAFKKAAKQS…KNKKKNRALF (70 aa)) is disordered. Composition is skewed to basic residues over residues 66 to 92 (KAAK…RVSH) and 122 to 131 (KNKKKNRALF).

The protein localises to the cell membrane. This is an uncharacterized protein from Bacillus subtilis (strain 168).